Here is a 402-residue protein sequence, read N- to C-terminus: MMMMGEGAHAPPWQQHVASPVSGVEGGGGRESEVVAAPYHLLDTLRHYLPSNEAAAAEDEEEAAAVAAAVDAYACDEFRMYEFKVRRCARGRSHDWTECPFAHPGEKARRRDPRRYCYSGTACPDFRKGGCKRGDACEFAHGVFECWLHPARYRTQPCKDGTACRRRVCFFAHTPDQLRVLPPSQQQGSNSPRGCGGGGAGAAASPLAESYDGSPLRRQAFESYLTKSIMSSSPTSTLVSPPRSPPSESPPLSPDAAGALRRGAWAGVGSPVNDVHVSLRQLRLGSPRSAPSCASFLPAGYQYGSPKSPAAAAAAALYSLPSTPTRLSPVTVTTASGATVTVEPLDLGLIEEEQPMERVESGRALREKVFERLSKEATVSTDAAAAAAGVAPDVGWVSDLIN.

C3H1-type zinc fingers lie at residues Cys-117–Phe-144 and Arg-152–Asp-176. 2 disordered regions span residues Val-180–Tyr-211 and Ser-232–Gly-258. The segment covering Pro-183–Pro-192 has biased composition (polar residues). The span at Ser-232 to Pro-241 shows a compositional bias: low complexity. The span at Pro-242 to Ser-253 shows a compositional bias: pro residues.

This is Zinc finger CCCH domain-containing protein 35 from Oryza sativa subsp. japonica (Rice).